The chain runs to 415 residues: Serine hydroxymethyltransferase (415 aa).

(6S)-5,6,7,8-tetrahydrofolate is bound by residues Leu-121 and 125–127 (GHL). An N6-(pyridoxal phosphate)lysine modification is found at Lys-230. A (6S)-5,6,7,8-tetrahydrofolate-binding site is contributed by 355–357 (SPF).

This sequence belongs to the SHMT family. In terms of assembly, homodimer. Requires pyridoxal 5'-phosphate as cofactor.

The protein localises to the cytoplasm. It carries out the reaction (6R)-5,10-methylene-5,6,7,8-tetrahydrofolate + glycine + H2O = (6S)-5,6,7,8-tetrahydrofolate + L-serine. The protein operates within one-carbon metabolism; tetrahydrofolate interconversion. It functions in the pathway amino-acid biosynthesis; glycine biosynthesis; glycine from L-serine: step 1/1. In terms of biological role, catalyzes the reversible interconversion of serine and glycine with tetrahydrofolate (THF) serving as the one-carbon carrier. This reaction serves as the major source of one-carbon groups required for the biosynthesis of purines, thymidylate, methionine, and other important biomolecules. Also exhibits THF-independent aldolase activity toward beta-hydroxyamino acids, producing glycine and aldehydes, via a retro-aldol mechanism. In Lactococcus lactis subsp. lactis (strain IL1403) (Streptococcus lactis), this protein is Serine hydroxymethyltransferase.